The sequence spans 340 residues: Phospho-N-acetylmuramoyl-pentapeptide-transferase (340 aa).

Helical transmembrane passes span 3-23 (MSLIAGVAAFVLTVLAMPHFI), 53-73 (GGTVFLVVAILISLIFNFHVF), 79-99 (AYGATAGILFVILIYGIIGFL), 119-139 (MALQIVAGLLFYFIHVLPSGT), 144-164 (IGGLTIQLGVFYVLFVLFWIV), 176-196 (IDGLASVSVVISLIAYGIIAF), 200-220 (ELAILTIIITMIGALLGFFVF), 227-247 (VFMGDVGSLSLGAMLAVISIA), 250-270 (VEWTLLLIGVVYVLETASVML), and 315-335 (VDAFLWTIGALASSITLWMVL).

This sequence belongs to the glycosyltransferase 4 family. MraY subfamily. Requires Mg(2+) as cofactor.

The protein resides in the cell membrane. The enzyme catalyses UDP-N-acetyl-alpha-D-muramoyl-L-alanyl-gamma-D-glutamyl-L-lysyl-D-alanyl-D-alanine + di-trans,octa-cis-undecaprenyl phosphate = Mur2Ac(oyl-L-Ala-gamma-D-Glu-L-Lys-D-Ala-D-Ala)-di-trans,octa-cis-undecaprenyl diphosphate + UMP. The protein operates within cell wall biogenesis; peptidoglycan biosynthesis. Its function is as follows. Catalyzes the initial step of the lipid cycle reactions in the biosynthesis of the cell wall peptidoglycan: transfers peptidoglycan precursor phospho-MurNAc-pentapeptide from UDP-MurNAc-pentapeptide onto the lipid carrier undecaprenyl phosphate, yielding undecaprenyl-pyrophosphoryl-MurNAc-pentapeptide, known as lipid I. This chain is Phospho-N-acetylmuramoyl-pentapeptide-transferase, found in Streptococcus thermophilus (strain ATCC BAA-250 / LMG 18311).